The sequence spans 325 residues: Flotillin-like protein FloA (325 aa).

2 consecutive transmembrane segments (helical) span residues 4–24 (LGIV…FSFI) and 26–46 (VGLW…TLVA).

It belongs to the flotillin-like FloA family. As to quaternary structure, homooligomerizes.

It is found in the cell membrane. Its subcellular location is the membrane raft. In terms of biological role, found in functional membrane microdomains (FMM) that may be equivalent to eukaryotic membrane rafts. FMMs are highly dynamic and increase in number as cells age. Flotillins are thought to be important factors in membrane fluidity. This is Flotillin-like protein FloA from Thermus thermophilus (strain ATCC BAA-163 / DSM 7039 / HB27).